Reading from the N-terminus, the 400-residue chain is Phosphoglycerate kinase (400 aa).

Residues 19–21 (DLN), Arg-38, 61–64 (HLGR), Arg-124, and Arg-161 each bind substrate. ATP contacts are provided by residues Lys-211, Gly-299, Glu-330, and 356-359 (GGDS).

Belongs to the phosphoglycerate kinase family. In terms of assembly, monomer.

It localises to the cytoplasm. It carries out the reaction (2R)-3-phosphoglycerate + ATP = (2R)-3-phospho-glyceroyl phosphate + ADP. Its pathway is carbohydrate degradation; glycolysis; pyruvate from D-glyceraldehyde 3-phosphate: step 2/5. This is Phosphoglycerate kinase from Parafrankia sp. (strain EAN1pec).